The following is a 352-amino-acid chain: DNA integrity scanning protein DisA (352 aa).

In terms of domain architecture, DAC spans 3–143; it reads PQELIEKIKL…NYKYVVNQVD (141 aa). ATP is bound by residues G71, L89, and 102-106; that span reads TRHRT.

It belongs to the DisA family. In terms of assembly, homooctamer. It depends on Mg(2+) as a cofactor.

It catalyses the reaction 2 ATP = 3',3'-c-di-AMP + 2 diphosphate. Its function is as follows. Participates in a DNA-damage check-point. DisA forms globular foci that rapidly scan along the chromosomes searching for lesions. In terms of biological role, also has diadenylate cyclase activity, catalyzing the condensation of 2 ATP molecules into cyclic di-AMP (c-di-AMP). c-di-AMP likely acts as a signaling molecule that may couple DNA integrity with a cellular process. This Thermotoga neapolitana (strain ATCC 49049 / DSM 4359 / NBRC 107923 / NS-E) protein is DNA integrity scanning protein DisA.